The chain runs to 133 residues: MVLHDDCKLTFLELKERRTFRSIVYKIEDNMQVIVEKHHYKKMHGEREQSYEEFANSLPADECRYAILDIEFVPGERKICFIAWSPSTAKMRKKMIYSSTKDRFKRELDGIQVEFHATDLTDISLDAIRRRIN.

In terms of domain architecture, ADF-H spans 1 to 133; that stretch reads MVLHDDCKLT…SLDAIRRRIN (133 aa).

It belongs to the actin-binding proteins ADF family.

The protein resides in the cytoplasm. Its subcellular location is the cytoskeleton. Its function is as follows. Actin-depolymerizing protein. Severs actin filaments (F-actin) and binds to actin monomers. The polypeptide is Putative actin-depolymerizing factor 11 (ADF11) (Arabidopsis thaliana (Mouse-ear cress)).